A 370-amino-acid chain; its full sequence is Chaperone protein DnaJ (370 aa).

The region spanning 5–69 (DYYEVLGVDR…QKKAHYDQFG (65 aa)) is the J domain. The CR-type zinc finger occupies 128-210 (GKETTIEIPR…CGGKGKVRKR (83 aa)). Positions 141, 144, 158, 161, 184, 187, 198, and 201 each coordinate Zn(2+). CXXCXGXG motif repeat units lie at residues 141-148 (CHTCSGSG), 158-165 (CPHCGGSG), 184-191 (CHHCEGTG), and 198-205 (CATCGGKG).

This sequence belongs to the DnaJ family. In terms of assembly, homodimer. Zn(2+) serves as cofactor.

It localises to the cytoplasm. Participates actively in the response to hyperosmotic and heat shock by preventing the aggregation of stress-denatured proteins and by disaggregating proteins, also in an autonomous, DnaK-independent fashion. Unfolded proteins bind initially to DnaJ; upon interaction with the DnaJ-bound protein, DnaK hydrolyzes its bound ATP, resulting in the formation of a stable complex. GrpE releases ADP from DnaK; ATP binding to DnaK triggers the release of the substrate protein, thus completing the reaction cycle. Several rounds of ATP-dependent interactions between DnaJ, DnaK and GrpE are required for fully efficient folding. Also involved, together with DnaK and GrpE, in the DNA replication of plasmids through activation of initiation proteins. In Halalkalibacterium halodurans (strain ATCC BAA-125 / DSM 18197 / FERM 7344 / JCM 9153 / C-125) (Bacillus halodurans), this protein is Chaperone protein DnaJ.